Here is a 30-residue protein sequence, read N- to C-terminus: Photosystem I reaction center subunit XII (30 aa).

Residues 7–26 form a helical membrane-spanning segment; sequence IFVALLFALVSAVLAIRLGT.

Belongs to the PsaM family.

It is found in the plastid. It localises to the chloroplast thylakoid membrane. The sequence is that of Photosystem I reaction center subunit XII from Gracilaria tenuistipitata var. liui (Red alga).